A 178-amino-acid chain; its full sequence is Peptide methionine sulfoxide reductase MsrA (178 aa).

Cysteine 11 is an active-site residue.

This sequence belongs to the MsrA Met sulfoxide reductase family.

The enzyme catalyses L-methionyl-[protein] + [thioredoxin]-disulfide + H2O = L-methionyl-(S)-S-oxide-[protein] + [thioredoxin]-dithiol. The catalysed reaction is [thioredoxin]-disulfide + L-methionine + H2O = L-methionine (S)-S-oxide + [thioredoxin]-dithiol. Has an important function as a repair enzyme for proteins that have been inactivated by oxidation. Catalyzes the reversible oxidation-reduction of methionine sulfoxide in proteins to methionine. This Natronomonas pharaonis (strain ATCC 35678 / DSM 2160 / CIP 103997 / JCM 8858 / NBRC 14720 / NCIMB 2260 / Gabara) (Halobacterium pharaonis) protein is Peptide methionine sulfoxide reductase MsrA.